The chain runs to 633 residues: Glutamyl-tRNA(Gln) amidotransferase subunit E (633 aa).

Residues 414–437 form a disordered region; sequence ALPDGNTEYMRPLPGKARMYPETD.

This sequence belongs to the GatB/GatE family. GatE subfamily. Heterodimer of GatD and GatE.

The catalysed reaction is L-glutamyl-tRNA(Gln) + L-glutamine + ATP + H2O = L-glutaminyl-tRNA(Gln) + L-glutamate + ADP + phosphate + H(+). Allows the formation of correctly charged Gln-tRNA(Gln) through the transamidation of misacylated Glu-tRNA(Gln) in organisms which lack glutaminyl-tRNA synthetase. The reaction takes place in the presence of glutamine and ATP through an activated gamma-phospho-Glu-tRNA(Gln). The GatDE system is specific for glutamate and does not act on aspartate. The sequence is that of Glutamyl-tRNA(Gln) amidotransferase subunit E from Pyrococcus abyssi (strain GE5 / Orsay).